The primary structure comprises 237 residues: Large ribosomal subunit protein uL1 (237 aa).

The protein belongs to the universal ribosomal protein uL1 family. As to quaternary structure, part of the 50S ribosomal subunit.

Its function is as follows. Binds directly to 23S rRNA. The L1 stalk is quite mobile in the ribosome, and is involved in E site tRNA release. Protein L1 is also a translational repressor protein, it controls the translation of the L11 operon by binding to its mRNA. This Myxococcus xanthus (strain DK1622) protein is Large ribosomal subunit protein uL1.